Here is a 653-residue protein sequence, read N- to C-terminus: ATP-dependent zinc metalloprotease FtsH 1 (653 aa).

Residues 1–20 form a disordered region; sequence MPENKNDKENKNDKENKNTK. At 1 to 30 the chain is on the cytoplasmic side; the sequence is MPENKNDKENKNDKENKNTKEEKKKVKFSN. A helical transmembrane segment spans residues 31 to 51; the sequence is IIWVYIIFAVFFIGALISLNW. Residues 52-126 lie on the Periplasmic side of the membrane; it reads ENNPIISYSE…EYVESVGTKW (75 aa). A helical transmembrane segment spans residues 127-147; it reads WFGLLINIIPIVVMVLFFFWL. The Cytoplasmic portion of the chain corresponds to 148 to 653; it reads YRSASAGARS…VVNHVNYQPV (506 aa). 219–226 serves as a coordination point for ATP; sequence GPPGTGKT. Residue His-441 participates in Zn(2+) binding. Residue Glu-442 is part of the active site. Residues His-445 and Asp-518 each contribute to the Zn(2+) site.

In the central section; belongs to the AAA ATPase family. This sequence in the C-terminal section; belongs to the peptidase M41 family. As to quaternary structure, homohexamer. Zn(2+) is required as a cofactor.

The protein resides in the cell inner membrane. Its function is as follows. Acts as a processive, ATP-dependent zinc metallopeptidase for both cytoplasmic and membrane proteins. Plays a role in the quality control of integral membrane proteins. The polypeptide is ATP-dependent zinc metalloprotease FtsH 1 (Petrotoga mobilis (strain DSM 10674 / SJ95)).